The following is a 400-amino-acid chain: Tryptophan synthase beta chain (400 aa).

N6-(pyridoxal phosphate)lysine is present on Lys95.

This sequence belongs to the TrpB family. In terms of assembly, tetramer of two alpha and two beta chains. Requires pyridoxal 5'-phosphate as cofactor.

It catalyses the reaction (1S,2R)-1-C-(indol-3-yl)glycerol 3-phosphate + L-serine = D-glyceraldehyde 3-phosphate + L-tryptophan + H2O. It participates in amino-acid biosynthesis; L-tryptophan biosynthesis; L-tryptophan from chorismate: step 5/5. The beta subunit is responsible for the synthesis of L-tryptophan from indole and L-serine. The chain is Tryptophan synthase beta chain from Chlorobaculum tepidum (strain ATCC 49652 / DSM 12025 / NBRC 103806 / TLS) (Chlorobium tepidum).